A 101-amino-acid polypeptide reads, in one-letter code: MAKQSMKAREVKRVKLANKFYTQRHELKNIISNMSISEEERWNAVLKLQSFPRDSSPSRQRNRCRQTGRPHAFLRKFGLSRIKVREAAMKGEIPGLKKASW.

It belongs to the universal ribosomal protein uS14 family. As to quaternary structure, part of the 30S ribosomal subunit. Contacts proteins S3 and S10.

Binds 16S rRNA, required for the assembly of 30S particles and may also be responsible for determining the conformation of the 16S rRNA at the A site. The polypeptide is Small ribosomal subunit protein uS14 (Buchnera aphidicola subsp. Acyrthosiphon pisum (strain APS) (Acyrthosiphon pisum symbiotic bacterium)).